The sequence spans 305 residues: 4-diphosphocytidyl-2-C-methyl-D-erythritol kinase (305 aa).

The active site involves lysine 10. ATP is bound at residue 95 to 105 (PVTAGLGGGSS). Aspartate 136 is a catalytic residue. Residues 286-305 (PGVTPWRSPRSASSPSTKRS) form a disordered region. Low complexity predominate over residues 290 to 305 (PWRSPRSASSPSTKRS).

Belongs to the GHMP kinase family. IspE subfamily.

It catalyses the reaction 4-CDP-2-C-methyl-D-erythritol + ATP = 4-CDP-2-C-methyl-D-erythritol 2-phosphate + ADP + H(+). Its pathway is isoprenoid biosynthesis; isopentenyl diphosphate biosynthesis via DXP pathway; isopentenyl diphosphate from 1-deoxy-D-xylulose 5-phosphate: step 3/6. In terms of biological role, catalyzes the phosphorylation of the position 2 hydroxy group of 4-diphosphocytidyl-2C-methyl-D-erythritol. In Anaeromyxobacter sp. (strain Fw109-5), this protein is 4-diphosphocytidyl-2-C-methyl-D-erythritol kinase.